Reading from the N-terminus, the 602-residue chain is Carbon catabolite repressor protein 4 homolog 1 (602 aa).

The segment at 113 to 136 is disordered; the sequence is ASAATEGNDEEELPRLNSSGSGSG. E299 lines the Mg(2+) pocket.

This sequence belongs to the CCR4/nocturin family. As to quaternary structure, component of the CCR4-NOT complex, at least composed of CRR4 and CAF1 proteins. Requires Mg(2+) as cofactor.

The protein resides in the nucleus. Its subcellular location is the cytoplasm. The enzyme catalyses Exonucleolytic cleavage of poly(A) to 5'-AMP.. In terms of biological role, acts as a catalytic component of the CCR4-NOT core complex, which in the nucleus seems to be a general transcription factor, and in the cytoplasm the major mRNA deadenylase involved in mRNA turnover. The sequence is that of Carbon catabolite repressor protein 4 homolog 1 (CCR4-1) from Arabidopsis thaliana (Mouse-ear cress).